The chain runs to 233 residues: Large ribosomal subunit protein uL1 (233 aa).

It belongs to the universal ribosomal protein uL1 family. In terms of assembly, part of the 50S ribosomal subunit.

In terms of biological role, binds directly to 23S rRNA. The L1 stalk is quite mobile in the ribosome, and is involved in E site tRNA release. Protein L1 is also a translational repressor protein, it controls the translation of the L11 operon by binding to its mRNA. This Deinococcus geothermalis (strain DSM 11300 / CIP 105573 / AG-3a) protein is Large ribosomal subunit protein uL1.